The primary structure comprises 144 residues: uncharacterized protein (144 aa).

Residues 72–90 (VAIGTSLIVGAGVAMEVSV) form a helical membrane-spanning segment.

It to yeast YCL21w.

Its subcellular location is the membrane. This is an uncharacterized protein from Saccharomyces cerevisiae (strain ATCC 204508 / S288c) (Baker's yeast).